Here is a 122-residue protein sequence, read N- to C-terminus: Large ribosomal subunit protein uL14c (122 aa).

This sequence belongs to the universal ribosomal protein uL14 family. In terms of assembly, part of the 50S ribosomal subunit.

Its subcellular location is the plastid. It localises to the chloroplast. In terms of biological role, binds to 23S rRNA. In Gnetum parvifolium (Small-leaved jointfir), this protein is Large ribosomal subunit protein uL14c.